We begin with the raw amino-acid sequence, 1968 residues long: RNA replication polyprotein (1968 aa).

The region spanning 63–254 is the Alphavirus-like MT domain; that stretch reads SPYSAVVHSH…YQQPLKGGYL (192 aa). The OTU domain maps to 883–991; that stretch reads YKRVSGPGDG…SEHYEPQVLR (109 aa). The Peptidase C23 domain occupies 990–1080; the sequence is LRNGCVIESV…ISDEHMSFCG (91 aa). Catalysis depends on residues cysteine 994 and histidine 1075. The (+)RNA virus helicase ATP-binding domain maps to 1134 to 1316; that stretch reads ATGVLGSALF…KVRSHRFLNC (183 aa). 1166-1173 provides a ligand contact to ATP; that stretch reads GTFGSGKS. One can recognise a (+)RNA virus helicase C-terminal domain in the interval 1317-1454; the sequence is NFIGRLPCEI…CKTAIPDDLN (138 aa). In terms of domain architecture, RdRp catalytic spans 1749 to 1856; it reads RICTESDYEA…SRRLQPTKKF (108 aa).

It belongs to the potexviruses/carlaviruses RNA replication protein family. Post-translationally, specific enzymatic cleavages by the viral protease yield mature proteins.

The catalysed reaction is RNA(n) + a ribonucleoside 5'-triphosphate = RNA(n+1) + diphosphate. It carries out the reaction ATP + H2O = ADP + phosphate + H(+). Its function is as follows. RNA-directed RNA polymerase involved in viral RNA replication. Protease: Thiol protease that cleaves the polyprotein. In Solanum tuberosum (Potato), this protein is RNA replication polyprotein.